We begin with the raw amino-acid sequence, 87 residues long: uncharacterized protein (87 aa).

Residues 4–87 (SKIIILNNNK…TISGSILIKI (84 aa)) form the 2Fe-2S ferredoxin-type domain. Residues cysteine 39, cysteine 44, cysteine 47, and cysteine 75 each contribute to the [2Fe-2S] cluster site.

Requires [2Fe-2S] cluster as cofactor.

This is an uncharacterized protein from Buchnera aphidicola subsp. Baizongia pistaciae (strain Bp).